The following is a 244-amino-acid chain: Fumarate reductase iron-sulfur subunit (244 aa).

Y14 contacts a menaquinone. Residues 16 to 97 (PEVDTAPHSA…GMKVEALANF (82 aa)) form the 2Fe-2S ferredoxin-type domain. The [2Fe-2S] cluster site is built by C58, C63, C66, and C78. In terms of domain architecture, 4Fe-4S ferredoxin-type spans 140–169 (MAKYHQFSGCINCGLCYAACPQFGLNPEFI). 3 residues coordinate [4Fe-4S] cluster: C149, C152, and C155. Residues C159, C205, and C211 each coordinate [3Fe-4S] cluster. C215 is a binding site for [4Fe-4S] cluster. 226-229 (QQGK) contributes to the a menaquinone binding site.

It belongs to the succinate dehydrogenase/fumarate reductase iron-sulfur protein family. As to quaternary structure, fumarate dehydrogenase forms part of an enzyme complex containing four subunits: a flavoprotein, an iron-sulfur, and two hydrophobic anchor proteins. [2Fe-2S] cluster serves as cofactor. The cofactor is [3Fe-4S] cluster. [4Fe-4S] cluster is required as a cofactor.

The protein resides in the cell inner membrane. It carries out the reaction a quinone + succinate = fumarate + a quinol. The catalysed reaction is a menaquinone + succinate = a menaquinol + fumarate. Its function is as follows. Two distinct, membrane-bound, FAD-containing enzymes are responsible for the catalysis of fumarate and succinate interconversion; the fumarate reductase is used in anaerobic growth, and the succinate dehydrogenase is used in aerobic growth. This is Fumarate reductase iron-sulfur subunit (frdB) from Escherichia coli O157:H7.